Here is a 229-residue protein sequence, read N- to C-terminus: NAD(P)H-hydrate epimerase (229 aa).

The YjeF N-terminal domain occupies 11-222; sequence YAAADIRAAE…DVGLDLSGAT (212 aa). 59 to 63 is a binding site for (6S)-NADPHX; the sequence is NNGGD. K(+) is bound by residues N60 and D124. (6S)-NADPHX contacts are provided by residues 128–136 and D164; that span reads GIGTTASPA. S167 is a binding site for K(+).

The protein belongs to the NnrE/AIBP family. It depends on K(+) as a cofactor.

It catalyses the reaction (6R)-NADHX = (6S)-NADHX. The catalysed reaction is (6R)-NADPHX = (6S)-NADPHX. Catalyzes the epimerization of the S- and R-forms of NAD(P)HX, a damaged form of NAD(P)H that is a result of enzymatic or heat-dependent hydration. This is a prerequisite for the S-specific NAD(P)H-hydrate dehydratase to allow the repair of both epimers of NAD(P)HX. This chain is NAD(P)H-hydrate epimerase, found in Clavibacter sepedonicus (Clavibacter michiganensis subsp. sepedonicus).